The chain runs to 102 residues: Integration host factor subunit alpha (102 aa).

The protein belongs to the bacterial histone-like protein family. Heterodimer of an alpha and a beta chain.

Functionally, this protein is one of the two subunits of integration host factor, a specific DNA-binding protein that functions in genetic recombination as well as in transcriptional and translational control. In Paracoccus denitrificans (strain Pd 1222), this protein is Integration host factor subunit alpha.